Here is a 185-residue protein sequence, read N- to C-terminus: MSDTADSLSARGIPKSELIEDVESWLTKEKLSIEEAEVVLREKYGKYKYVESSMLAQKVRMSEKIPEFENSLSIIDTLIAKRAADESFETTFLLSDDVYTKATVQKPEKVSIWLGANVMVEYDLENARKLLDKNRGSVQKVVDELTNELSYIKDQITTTEVNMSHIVNFGVNKRRAALAVNNGAK.

The protein belongs to the prefoldin subunit alpha family. As to quaternary structure, heterohexamer of two PFD-alpha type and four PFD-beta type subunits.

Its function is as follows. Binds specifically to cytosolic chaperonin (c-CPN) and transfers target proteins to it. Binds to nascent polypeptide chain and promotes folding in an environment in which there are many competing pathways for nonnative proteins. In Caenorhabditis elegans, this protein is Probable prefoldin subunit 3 (pfd-3).